The following is a 248-amino-acid chain: Probable transcriptional regulatory protein Acel_1346 (248 aa).

It belongs to the TACO1 family.

The protein localises to the cytoplasm. This Acidothermus cellulolyticus (strain ATCC 43068 / DSM 8971 / 11B) protein is Probable transcriptional regulatory protein Acel_1346.